The following is a 129-amino-acid chain: Glycine cleavage system H protein (129 aa).

In terms of domain architecture, Lipoyl-binding spans 24–106; it reads SYTVGITEHA…FGDGWFFRVM (83 aa). Residue Lys65 is modified to N6-lipoyllysine.

This sequence belongs to the GcvH family. The glycine cleavage system is composed of four proteins: P, T, L and H. It depends on (R)-lipoate as a cofactor.

The glycine cleavage system catalyzes the degradation of glycine. The H protein shuttles the methylamine group of glycine from the P protein to the T protein. The sequence is that of Glycine cleavage system H protein from Shewanella frigidimarina (strain NCIMB 400).